The primary structure comprises 236 residues: tRNA1(Val) (adenine(37)-N6)-methyltransferase (236 aa).

It belongs to the methyltransferase superfamily. tRNA (adenine-N(6)-)-methyltransferase family.

Its subcellular location is the cytoplasm. The catalysed reaction is adenosine(37) in tRNA1(Val) + S-adenosyl-L-methionine = N(6)-methyladenosine(37) in tRNA1(Val) + S-adenosyl-L-homocysteine + H(+). Specifically methylates the adenine in position 37 of tRNA(1)(Val) (anticodon cmo5UAC). This is tRNA1(Val) (adenine(37)-N6)-methyltransferase from Actinobacillus pleuropneumoniae serotype 7 (strain AP76).